We begin with the raw amino-acid sequence, 485 residues long: Glutamyl-tRNA(Gln) amidotransferase subunit A (485 aa).

Catalysis depends on charge relay system residues Lys-79 and Ser-154. Ser-178 acts as the Acyl-ester intermediate in catalysis.

It belongs to the amidase family. GatA subfamily. Heterotrimer of A, B and C subunits.

It catalyses the reaction L-glutamyl-tRNA(Gln) + L-glutamine + ATP + H2O = L-glutaminyl-tRNA(Gln) + L-glutamate + ADP + phosphate + H(+). Allows the formation of correctly charged Gln-tRNA(Gln) through the transamidation of misacylated Glu-tRNA(Gln) in organisms which lack glutaminyl-tRNA synthetase. The reaction takes place in the presence of glutamine and ATP through an activated gamma-phospho-Glu-tRNA(Gln). This chain is Glutamyl-tRNA(Gln) amidotransferase subunit A, found in Clostridium botulinum (strain Langeland / NCTC 10281 / Type F).